The primary structure comprises 170 residues: Adenine phosphoribosyltransferase (170 aa).

Belongs to the purine/pyrimidine phosphoribosyltransferase family. In terms of assembly, homodimer.

It localises to the cytoplasm. The enzyme catalyses AMP + diphosphate = 5-phospho-alpha-D-ribose 1-diphosphate + adenine. It functions in the pathway purine metabolism; AMP biosynthesis via salvage pathway; AMP from adenine: step 1/1. In terms of biological role, catalyzes a salvage reaction resulting in the formation of AMP, that is energically less costly than de novo synthesis. This Flavobacterium johnsoniae (strain ATCC 17061 / DSM 2064 / JCM 8514 / BCRC 14874 / CCUG 350202 / NBRC 14942 / NCIMB 11054 / UW101) (Cytophaga johnsonae) protein is Adenine phosphoribosyltransferase.